The primary structure comprises 286 residues: Alpha-ketoglutarate-dependent dioxygenase alkB homolog 3 (286 aa).

Residues 1–38 (MEDKRRRARVQGAWAGPAKSQATAQPAPTAENNLQQRP) form a disordered region. Polar residues predominate over residues 20–36 (SQATAQPAPTAENNLQQ). Substrate contacts are provided by residues Trp-115 and 141-143 (YTY). The region spanning 172 to 278 (SFNSLLCNLY…RINLTFRTVY (107 aa)) is the Fe2OG dioxygenase domain. The residue at position 177 (Leu-177) is a (4R)-5-hydroxyleucine; alternate. (4R)-5-oxoleucine; alternate is present on Leu-177. 179 to 181 (NLY) is a 2-oxoglutarate binding site. His-191 and Asp-193 together coordinate Fe cation. Asp-194 contributes to the substrate binding site. A Fe cation-binding site is contributed by His-257. 2-oxoglutarate-binding positions include 269-275 (RINLTFR) and Arg-275.

This sequence belongs to the alkB family. Interacts with the ASCC complex composed of ASCC1, ASCC2 and ASCC3. Interacts directly with ASCC3, and is thereby recruited to the ASCC complex. Interacts with OTUD4; the interaction is direct. Interacts with USP7 and USP9X. The cofactor is Fe(2+). Post-translationally, ubiquitinated; undergoes 'Lys-48'-linked polyubiquitination. OTUD4 promotes USP7 and USP9X-dependent deubiquitination of 'Lys-48'-polyubiquitinated ALKBH3 promoting the repair of alkylated DNA lesions.

The protein localises to the nucleus. Its subcellular location is the cytoplasm. It catalyses the reaction an N(1)-methyladenosine in mRNA + 2-oxoglutarate + O2 = an adenosine in mRNA + formaldehyde + succinate + CO2. It carries out the reaction a methylated nucleobase within DNA + 2-oxoglutarate + O2 = a nucleobase within DNA + formaldehyde + succinate + CO2. The catalysed reaction is an N(1)-methyl-2'-deoxyadenosine in single-stranded DNA + 2-oxoglutarate + O2 = a 2'-deoxyadenosine in single-stranded DNA + formaldehyde + succinate + CO2 + H(+). The enzyme catalyses an N(3)-methyl-2'-deoxycytidine in single-stranded DNA + 2-oxoglutarate + O2 = a 2'-deoxycytidine in single-stranded DNA + formaldehyde + succinate + CO2 + H(+). It catalyses the reaction a 3,N(4)-etheno-2'-deoxycytidine in single-stranded DNA + 2-oxoglutarate + O2 + H2O = a 2'-deoxycytidine in single-stranded DNA + glyoxal + succinate + CO2. Activated by ascorbate. In terms of biological role, dioxygenase that mediates demethylation of DNA and RNA containing 1-methyladenosine (m1A). Repairs alkylated DNA containing 1-methyladenosine (m1A) and 3-methylcytosine (m3C) by oxidative demethylation. Has a strong preference for single-stranded DNA. Able to process alkylated m3C within double-stranded regions via its interaction with ASCC3, which promotes DNA unwinding to generate single-stranded substrate needed for ALKBH3. Can repair exocyclic 3,N4-ethenocytosine adducs in single-stranded DNA. Also acts on RNA. Demethylates N(1)-methyladenosine (m1A) RNA, an epigenetic internal modification of messenger RNAs (mRNAs) highly enriched within 5'-untranslated regions (UTRs) and in the vicinity of start codons. Requires molecular oxygen, alpha-ketoglutarate and iron. This is Alpha-ketoglutarate-dependent dioxygenase alkB homolog 3 from Bos taurus (Bovine).